The sequence spans 338 residues: Heat-inducible transcription repressor HrcA (338 aa).

Belongs to the HrcA family.

In terms of biological role, negative regulator of class I heat shock genes (grpE-dnaK-dnaJ and groELS operons). Prevents heat-shock induction of these operons. This is Heat-inducible transcription repressor HrcA from Nitrosomonas europaea (strain ATCC 19718 / CIP 103999 / KCTC 2705 / NBRC 14298).